The chain runs to 98 residues: MTPVHFSFTSAFILGLMGLAFHRTHLLSALLCLEGMMLSLFIALSLWALQMEATGYSVAPMLLLAFSACEASAGLALLVATARTHGTDRLQSLNLLQC.

3 helical membrane-spanning segments follow: residues 1–21 (MTPVHFSFTSAFILGLMGLAF), 29–49 (ALLCLEGMMLSLFIALSLWAL), and 58–78 (VAPMLLLAFSACEASAGLALL).

The protein belongs to the complex I subunit 4L family.

Its subcellular location is the mitochondrion membrane. It catalyses the reaction a ubiquinone + NADH + 5 H(+)(in) = a ubiquinol + NAD(+) + 4 H(+)(out). In terms of biological role, core subunit of the mitochondrial membrane respiratory chain NADH dehydrogenase (Complex I) which catalyzes electron transfer from NADH through the respiratory chain, using ubiquinone as an electron acceptor. Part of the enzyme membrane arm which is embedded in the lipid bilayer and involved in proton translocation. The chain is NADH-ubiquinone oxidoreductase chain 4L (MT-ND4L) from Oncorhynchus clarkii (Cutthroat trout).